Here is a 443-residue protein sequence, read N- to C-terminus: Glucose-6-phosphate isomerase (443 aa).

E285 serves as the catalytic Proton donor. Active-site residues include H306 and K420.

Belongs to the GPI family.

The protein resides in the cytoplasm. It catalyses the reaction alpha-D-glucose 6-phosphate = beta-D-fructose 6-phosphate. It participates in carbohydrate biosynthesis; gluconeogenesis. Its pathway is carbohydrate degradation; glycolysis; D-glyceraldehyde 3-phosphate and glycerone phosphate from D-glucose: step 2/4. In terms of biological role, catalyzes the reversible isomerization of glucose-6-phosphate to fructose-6-phosphate. This Staphylococcus saprophyticus subsp. saprophyticus (strain ATCC 15305 / DSM 20229 / NCIMB 8711 / NCTC 7292 / S-41) protein is Glucose-6-phosphate isomerase.